An 89-amino-acid chain; its full sequence is Defensin-like protein 103 (89 aa).

An N-terminal signal peptide occupies residues 1–24; it reads MAITRKNLVAFCFTILFIISSIHC. 4 cysteine pairs are disulfide-bonded: C46–C84, C52–C75, C61–C82, and C65–C83.

The protein belongs to the DEFL family.

The protein resides in the secreted. The polypeptide is Defensin-like protein 103 (Arabidopsis thaliana (Mouse-ear cress)).